The primary structure comprises 185 residues: Ribosome-recycling factor (185 aa).

The protein belongs to the RRF family.

It is found in the cytoplasm. Responsible for the release of ribosomes from messenger RNA at the termination of protein biosynthesis. May increase the efficiency of translation by recycling ribosomes from one round of translation to another. The chain is Ribosome-recycling factor from Neisseria gonorrhoeae (strain ATCC 700825 / FA 1090).